Here is a 556-residue protein sequence, read N- to C-terminus: Delta-1-pyrroline-5-carboxylate dehydrogenase 12A1, mitochondrial (556 aa).

282–287 serves as a coordination point for NAD(+); it reads GSSRVA. The active-site Proton acceptor is E301. C336 functions as the Nucleophile in the catalytic mechanism.

The protein belongs to the aldehyde dehydrogenase family. Highly expressed in flowers. Constitutively expressed at low levels in the other tissues. Highly expressed in pollen grains and tissues undergoing cell death. Expressed in old leaves, mature siliques and developing embryos.

The protein resides in the mitochondrion matrix. The enzyme catalyses (S)-1-pyrroline-5-carboxylate + NAD(+) + 2 H2O = L-glutamate + NADH + H(+). It participates in amino-acid degradation; L-proline degradation into L-glutamate; L-glutamate from L-proline: step 2/2. Functionally, plays a role in the inhibition of programmed cell death by converting the toxic proline catabolism intermediate (s)-1-pyrroline-5-carboxylate (P5C) to glutamate. The polypeptide is Delta-1-pyrroline-5-carboxylate dehydrogenase 12A1, mitochondrial (Arabidopsis thaliana (Mouse-ear cress)).